The primary structure comprises 322 residues: Transaldolase (322 aa).

The active-site Schiff-base intermediate with substrate is Lys-136.

This sequence belongs to the transaldolase family. Type 1 subfamily. As to quaternary structure, homodimer.

The protein localises to the cytoplasm. It catalyses the reaction D-sedoheptulose 7-phosphate + D-glyceraldehyde 3-phosphate = D-erythrose 4-phosphate + beta-D-fructose 6-phosphate. It functions in the pathway carbohydrate degradation; pentose phosphate pathway; D-glyceraldehyde 3-phosphate and beta-D-fructose 6-phosphate from D-ribose 5-phosphate and D-xylulose 5-phosphate (non-oxidative stage): step 2/3. Transaldolase is important for the balance of metabolites in the pentose-phosphate pathway. The chain is Transaldolase from Xanthomonas oryzae pv. oryzae (strain MAFF 311018).